The sequence spans 274 residues: Large ribosomal subunit protein uL2 (274 aa).

Disordered stretches follow at residues 28 to 53 (KPYAPLLEKNSKSGGRNNNGRITVRH) and 223 to 274 (VAMN…RRTK). The segment covering 39-48 (KSGGRNNNGR) has biased composition (low complexity). Residues 254 to 274 (KGAKTRKNKRTDKFIVRRRTK) show a composition bias toward basic residues.

This sequence belongs to the universal ribosomal protein uL2 family. As to quaternary structure, part of the 50S ribosomal subunit. Forms a bridge to the 30S subunit in the 70S ribosome.

Functionally, one of the primary rRNA binding proteins. Required for association of the 30S and 50S subunits to form the 70S ribosome, for tRNA binding and peptide bond formation. It has been suggested to have peptidyltransferase activity; this is somewhat controversial. Makes several contacts with the 16S rRNA in the 70S ribosome. This Pseudoalteromonas translucida (strain TAC 125) protein is Large ribosomal subunit protein uL2.